A 366-amino-acid chain; its full sequence is Galactoside alpha-(1,2)-fucosyltransferase 1 (366 aa).

Over 1 to 8 (MWPPSHRQ) the chain is Cytoplasmic. A helical; Signal-anchor for type II membrane protein membrane pass occupies residues 9-25 (LCLAFLLVCVLSVISFF). Residues 26–366 (LHIHQDSFPH…LSSLWTLAKP (341 aa)) are Lumenal-facing. Residues Asn-66, Asn-302, and Asn-328 are each glycosylated (N-linked (GlcNAc...) asparagine).

This sequence belongs to the glycosyltransferase 11 family.

It is found in the golgi apparatus. It localises to the golgi stack membrane. It carries out the reaction a beta-D-galactosyl-(1-&gt;4)-N-acetyl-beta-D-glucosaminyl derivative + GDP-beta-L-fucose = an alpha-L-Fuc-(1-&gt;2)-beta-D-Gal-(1-&gt;4)-beta-D-GlcNAc derivative + GDP + H(+). The catalysed reaction is a ganglioside GA1 + GDP-beta-L-fucose = a ganglioside Fuc-GA1 + GDP + H(+). The enzyme catalyses a beta-D-Gal-(1-&gt;3)-beta-D-GlcNAc-(1-&gt;3)-beta-D-Gal-(1-&gt;4)-beta-D-Glc-(1&lt;-&gt;1')-Cer(d18:1(4E)) + GDP-beta-L-fucose = alpha-L-fucosyl-(1-&gt;2)- beta-D-galactosyl-(1-&gt;3)-N-acetyl-beta-D-glucosaminyl-(1-&gt;3)-beta-D-galactosyl-(1-&gt;4)-beta-D-glucosyl-(1&lt;-&gt;1')-N-acylsphing-4-enine + GDP + H(+). It catalyses the reaction a neolactoside nLc4Cer(d18:1(4E)) + GDP-beta-L-fucose = a neolactoside IV(2)-alpha-Fuc-nLc4Cer(d18:1(4E)) + GDP + H(+). It carries out the reaction a ganglioside GM1 + GDP-beta-L-fucose = a ganglioside Fuc-GM1 + GDP + H(+). The catalysed reaction is beta-D-galactosyl-(1-&gt;3)-N-acetyl-D-galactosamine + GDP-beta-L-fucose = alpha-L-fucosyl-(1-&gt;2)-beta-D-galactosyl-(1-&gt;3)-N-acetyl-D-galactosamine + GDP + H(+). It functions in the pathway protein modification; protein glycosylation. In terms of biological role, catalyzes the transfer of L-fucose, from a guanosine diphosphate-beta-L-fucose, to the terminal galactose residue of glycoconjugates through an alpha(1,2) linkage leading to H antigen synthesis that is an intermediate substrate in the synthesis of ABO blood group antigens. H antigen is essential for maturation of the glomerular layer of the main olfactory bulb, in cell migration and early cell-cell contacts during tumor associated angiogenesis. Preferentially fucosylates soluble lactose and to a lesser extent fucosylates glycolipids gangliosides GA1 and GM1a. The polypeptide is Galactoside alpha-(1,2)-fucosyltransferase 1 (Pan troglodytes (Chimpanzee)).